The chain runs to 194 residues: Protein GrpE (194 aa).

The span at 1 to 14 (MENTQENPTSQNPT) shows a compositional bias: polar residues. Residues 1–50 (MENTQENPTSQNPTPADETARQAAEAAAPQQEAAANAATDSPVNAEQSAL) form a disordered region. Over residues 21–38 (RQAAEAAAPQQEAAANAA) the composition is skewed to low complexity.

The protein belongs to the GrpE family. Homodimer.

The protein resides in the cytoplasm. In terms of biological role, participates actively in the response to hyperosmotic and heat shock by preventing the aggregation of stress-denatured proteins, in association with DnaK and GrpE. It is the nucleotide exchange factor for DnaK and may function as a thermosensor. Unfolded proteins bind initially to DnaJ; upon interaction with the DnaJ-bound protein, DnaK hydrolyzes its bound ATP, resulting in the formation of a stable complex. GrpE releases ADP from DnaK; ATP binding to DnaK triggers the release of the substrate protein, thus completing the reaction cycle. Several rounds of ATP-dependent interactions between DnaJ, DnaK and GrpE are required for fully efficient folding. This Paraburkholderia phytofirmans (strain DSM 17436 / LMG 22146 / PsJN) (Burkholderia phytofirmans) protein is Protein GrpE.